Here is a 55-residue protein sequence, read N- to C-terminus: Large ribosomal subunit protein bL33 (55 aa).

The protein belongs to the bacterial ribosomal protein bL33 family.

This chain is Large ribosomal subunit protein bL33, found in Sinorhizobium medicae (strain WSM419) (Ensifer medicae).